Reading from the N-terminus, the 193-residue chain is V-type ATP synthase subunit E (193 aa).

The protein belongs to the V-ATPase E subunit family.

Produces ATP from ADP in the presence of a proton gradient across the membrane. The protein is V-type ATP synthase subunit E of Anaeromyxobacter sp. (strain Fw109-5).